A 162-amino-acid polypeptide reads, in one-letter code: Shikimate kinase (162 aa).

11-16 contributes to the ATP binding site; sequence GSGKSS. S15 is a Mg(2+) binding site. Substrate contacts are provided by D33, R57, and G80. Positions 109 to 123 are LID domain; the sequence is NQKEREKRPLLNNLT. R116 is a binding site for ATP. R132 contacts substrate.

The protein belongs to the shikimate kinase family. Monomer. The cofactor is Mg(2+).

The protein localises to the cytoplasm. It catalyses the reaction shikimate + ATP = 3-phosphoshikimate + ADP + H(+). It functions in the pathway metabolic intermediate biosynthesis; chorismate biosynthesis; chorismate from D-erythrose 4-phosphate and phosphoenolpyruvate: step 5/7. In terms of biological role, catalyzes the specific phosphorylation of the 3-hydroxyl group of shikimic acid using ATP as a cosubstrate. This is Shikimate kinase (aroK) from Helicobacter pylori (strain ATCC 700392 / 26695) (Campylobacter pylori).